The primary structure comprises 508 residues: Lysine--tRNA ligase (508 aa).

Mg(2+) is bound by residues Glu418 and Glu425.

Belongs to the class-II aminoacyl-tRNA synthetase family. Homodimer. It depends on Mg(2+) as a cofactor.

Its subcellular location is the cytoplasm. The enzyme catalyses tRNA(Lys) + L-lysine + ATP = L-lysyl-tRNA(Lys) + AMP + diphosphate. The sequence is that of Lysine--tRNA ligase from Burkholderia cenocepacia (strain HI2424).